A 558-amino-acid polypeptide reads, in one-letter code: Probable beta-glucosidase btgE (558 aa).

The signal sequence occupies residues 1-18; that stretch reads MKAAILATAAALTGSALA. Disordered stretches follow at residues 64–105 and 251–305; these read STPS…PETP and LPSS…QMGM. Composition is skewed to low complexity over residues 76–105 and 252–292; these read PETT…PETP and PSSS…SSSA. Residues 293–305 show a composition bias toward polar residues; the sequence is EVPQTTGSGQMGM. E399 functions as the Proton donor in the catalytic mechanism. The active-site Nucleophile is the E495.

Belongs to the glycosyl hydrolase 17 family.

Its subcellular location is the secreted. The protein localises to the cell wall. It catalyses the reaction Hydrolysis of terminal, non-reducing beta-D-glucosyl residues with release of beta-D-glucose.. The protein operates within glycan metabolism; cellulose degradation. Beta-glucosidases are one of a number of cellulolytic enzymes involved in the degradation of cellulosic biomass. Catalyzes the last step releasing glucose from the inhibitory cellobiose. This Aspergillus terreus (strain NIH 2624 / FGSC A1156) protein is Probable beta-glucosidase btgE (btgE).